A 108-amino-acid polypeptide reads, in one-letter code: DIQMTQTTSSLSASLGDRVTISCRASQDINNYLNWYQQKPDGTVKLLIYYTSRLHSGVPSRFSGSGSGTDYSLTISNLEQEDIATYFCQQGKTLPRTFGGGTKLEIKR.

The tract at residues 1–23 (DIQMTQTTSSLSASLGDRVTISC) is framework-1. Cysteine 23 and cysteine 88 are oxidised to a cystine. The tract at residues 24–34 (RASQDINNYLN) is complementarity-determining-1. Positions 35–49 (WYQQKPDGTVKLLIY) are framework-2. The tract at residues 50-56 (YTSRLHS) is complementarity-determining-2. The tract at residues 57–88 (GVPSRFSGSGSGTDYSLTISNLEQEDIATYFC) is framework-3. Positions 89–97 (QQGKTLPRT) are complementarity-determining-3. Residues 98–108 (FGGGTKLEIKR) are framework-4.

This is Ig kappa chain V-V region HP 124E1 from Mus musculus (Mouse).